A 429-amino-acid chain; its full sequence is Adenylosuccinate synthetase (429 aa).

Residues 12-18 (GDEGKGK) and 40-42 (GHT) contribute to the GTP site. The active-site Proton acceptor is Asp-13. Asp-13 and Gly-40 together coordinate Mg(2+). IMP is bound by residues 13-16 (DEGK), 38-41 (NAGH), Thr-128, Arg-142, Gln-223, Thr-238, and Arg-302. The active-site Proton donor is His-41. 298–304 (VNTGRKR) is a substrate binding site. GTP contacts are provided by residues Arg-304, 330-332 (KLD), and 412-414 (GVG).

This sequence belongs to the adenylosuccinate synthetase family. Homodimer. Requires Mg(2+) as cofactor.

Its subcellular location is the cytoplasm. The enzyme catalyses IMP + L-aspartate + GTP = N(6)-(1,2-dicarboxyethyl)-AMP + GDP + phosphate + 2 H(+). Its pathway is purine metabolism; AMP biosynthesis via de novo pathway; AMP from IMP: step 1/2. Functionally, plays an important role in the de novo pathway of purine nucleotide biosynthesis. Catalyzes the first committed step in the biosynthesis of AMP from IMP. This is Adenylosuccinate synthetase from Corynebacterium glutamicum (strain R).